The primary structure comprises 1413 residues: GTPase-activating protein and VPS9 domain-containing protein 1 (1413 aa).

The 239-residue stretch at 147 to 385 (SYLLQVLRYL…AAFLDVVIGG (239 aa)) folds into the Ras-GAP domain. Residue Ser227 is modified to Phosphoserine. Phosphothreonine is present on residues Thr390 and Thr458. Disordered stretches follow at residues 448-474 (KPGK…PANK), 540-587 (LSDG…GSNG), 718-799 (ESCS…PPSQ), and 826-852 (HYAR…ARLP). Residues 451-467 (KSSSLEMTPYSTPQLSP) show a composition bias toward polar residues. Tyr460 is modified (phosphotyrosine). A Phosphoserine modification is found at Ser466. Thr470 carries the post-translational modification Phosphothreonine. 3 positions are modified to phosphoserine: Ser721, Ser725, and Ser736. The segment covering 737–756 (SRPSTPGLSVVSGISATSED) has biased composition (polar residues). At Thr741 the chain carries Phosphothreonine. Ser745 carries the post-translational modification Phosphoserine. The segment covering 757–768 (IPNKIEDLRSEC) has biased composition (basic and acidic residues). A phosphoserine mark is found at Ser856, Ser882, Ser883, Ser888, Ser894, Ser946, Ser972, and Ser999. The span at 871-882 (HSYPERLVRSRS) shows a compositional bias: basic and acidic residues. Residues 871–957 (HSYPERLVRS…DEKSDRNRPW (87 aa)) form a disordered region. Residues 883 to 897 (SDVVSSVRRPMSDPS) are compositionally biased toward low complexity. The segment covering 934-955 (DSSRGETEERKDSDDEKSDRNR) has biased composition (basic and acidic residues). Residues 1011-1049 (VMGDGESAHDSPRDETLQNISADDLPDSASQAAHPQDSA) are disordered. Residues 1016 to 1026 (ESAHDSPRDET) are compositionally biased toward basic and acidic residues. Phosphoserine is present on residues Ser1031 and Ser1038. Residues 1273-1413 (ILRDQVLHEH…EFIKTIDDRK (141 aa)) form the VPS9 domain.

The protein belongs to the GAPVD1 family. In terms of assembly, interacts with TRIP10/CIP4. Interacts with RAB5A.

It localises to the membrane. The protein resides in the endosome. In terms of biological role, acts both as a GTPase-activating protein (GAP) and a guanine nucleotide exchange factor (GEF), and participates in various processes such as endocytosis, insulin receptor internalization or LC2A4/GLUT4 trafficking. Acts as a GEF for the Ras-related protein RAB31 by exchanging bound GDP for free GTP, leading to regulate LC2A4/GLUT4 trafficking. In the absence of insulin, it maintains RAB31 in an active state and promotes a futile cycle between LC2A4/GLUT4 storage vesicles and early endosomes, retaining LC2A4/GLUT4 inside the cells. Upon insulin stimulation, it is translocated to the plasma membrane, releasing LC2A4/GLUT4 from intracellular storage vesicles. Also involved in EGFR trafficking and degradation, possibly by promoting EGFR ubiquitination and subsequent degradation by the proteasome. Has GEF activity for Rab5 and GAP activity for Ras. The polypeptide is GTPase-activating protein and VPS9 domain-containing protein 1 (GAPVD1) (Bos taurus (Bovine)).